The primary structure comprises 87 residues: Large ribosomal subunit protein eL31 (87 aa).

It belongs to the eukaryotic ribosomal protein eL31 family.

In Methanocaldococcus jannaschii (strain ATCC 43067 / DSM 2661 / JAL-1 / JCM 10045 / NBRC 100440) (Methanococcus jannaschii), this protein is Large ribosomal subunit protein eL31 (rpl31e).